We begin with the raw amino-acid sequence, 2023 residues long: Protein Daple (2023 aa).

Residues 11 to 131 (NFMDSPLVVW…RMLLLILGCA (121 aa)) enclose the Calponin-homology (CH) domain. Coiled coils occupy residues 250–415 (RQHL…LLEE), 458–1064 (NESA…VEKN), and 1105–1419 (LKQI…QYKF). The tract at residues 1013–1035 (RHEEEAAHSEISQQTLGQTRSLP) is disordered. The span at 1022-1033 (EISQQTLGQTRS) shows a compositional bias: polar residues. Disordered regions lie at residues 1441 to 1824 (KPKK…GSAS) and 1837 to 2023 (LRSN…YGCV). Residues 1442–1460 (PKKESSRERPDAPRERIRS) are compositionally biased toward basic and acidic residues. The segment covering 1478–1491 (SAPPPPPPPLPPRQ) has biased composition (pro residues). Polar residues-rich tracts occupy residues 1497 to 1518 (DSMNSQSVEENHVQSPTLSSPA) and 1564 to 1585 (TCSTPLSRNSHNAPGFTSSSSL). Low complexity-rich tracts occupy residues 1623-1643 (SAEFSRNTSSSNSPVSSKGSL) and 1667-1704 (RLSQSSLLPRSSTLPCDSPSASRPSQRPASRRPSSPGS). The short motif at 1700–1728 (SSPGSEMVTLEEFLQESNALSPPTVQTGS) is the GBA element. 4 stretches are compositionally biased toward polar residues: residues 1714–1727 (QESNALSPPTVQTG), 1752–1763 (TPTNYVTPTVKT), 1785–1799 (LTDTSTPPSHSQTLP), and 1809–1824 (ALQQSSPRGSVGGSAS). A compositionally biased stretch (basic and acidic residues) spans 1890 to 1904 (VDPRRLSLAQPRDEF). The segment covering 1927–1945 (GSGSSRAGAARSGSAQPRG) has biased composition (low complexity). Basic and acidic residues predominate over residues 1974–1988 (QEQREAESPLLKKAD). Polar residues predominate over residues 1989–2014 (TTNLSYASKEQPTSKPASPDPNNDPQ). Positions 2020–2023 (YGCV) match the PDZ-binding motif.

Belongs to the CCDC88 family.

Its subcellular location is the cytoplasm. The protein resides in the cell junction. In terms of biological role, positive regulator of Wnt signaling, acting synergistically with dvl2. Functions upstream of ctnnb1/beta-catenin in the canonical Wnt pathway, and also activates jnk in the Wnt/planar cell polarity (PCP) pathway. Acts as a non-receptor guanine nucleotide exchange factor which binds to and activates guanine nucleotide-binding protein G(i) alpha (Gi-alpha) subunits. This promotes apical cell constriction and subsequent bending of the neural plate during neurulation via arhgef18. The sequence is that of Protein Daple from Danio rerio (Zebrafish).